The sequence spans 213 residues: Chloramphenicol acetyltransferase 2 (213 aa).

H189 acts as the Proton acceptor in catalysis.

It belongs to the chloramphenicol acetyltransferase family. Homotrimer.

It carries out the reaction chloramphenicol + acetyl-CoA = chloramphenicol 3-acetate + CoA. Its function is as follows. This enzyme is an effector of chloramphenicol resistance in bacteria. This is Chloramphenicol acetyltransferase 2 (cmlA) from Escherichia coli.